Consider the following 55-residue polypeptide: Large ribosomal subunit protein bL32 (55 aa).

Positions 1–23 (MAVPKKKTSKAKRDQRRAHWKRK) are enriched in basic residues. Positions 1 to 26 (MAVPKKKTSKAKRDQRRAHWKRKATI) are disordered.

Belongs to the bacterial ribosomal protein bL32 family.

This Picosynechococcus sp. (strain ATCC 27264 / PCC 7002 / PR-6) (Agmenellum quadruplicatum) protein is Large ribosomal subunit protein bL32.